Reading from the N-terminus, the 398-residue chain is Exodeoxyribonuclease 7 large subunit (398 aa).

The protein belongs to the XseA family. As to quaternary structure, heterooligomer composed of large and small subunits.

The protein resides in the cytoplasm. The catalysed reaction is Exonucleolytic cleavage in either 5'- to 3'- or 3'- to 5'-direction to yield nucleoside 5'-phosphates.. Bidirectionally degrades single-stranded DNA into large acid-insoluble oligonucleotides, which are then degraded further into small acid-soluble oligonucleotides. This is Exodeoxyribonuclease 7 large subunit from Anaplasma phagocytophilum (strain HZ).